We begin with the raw amino-acid sequence, 437 residues long: Adenylosuccinate synthetase 1 (437 aa).

GTP is bound by residues 13-19 and 41-43; these read GDEGKGK and GHT. The active-site Proton acceptor is aspartate 14. Residues aspartate 14 and glycine 41 each contribute to the Mg(2+) site. Residues 14–17, 39–42, threonine 130, arginine 144, glutamine 225, threonine 240, and arginine 310 contribute to the IMP site; these read DEGK and NAGH. Residue histidine 42 is the Proton donor of the active site. 306 to 312 lines the substrate pocket; it reads ATTGRLR. GTP-binding positions include arginine 312, 338 to 340, and 421 to 423; these read KLD and STG.

The protein belongs to the adenylosuccinate synthetase family. In terms of assembly, homodimer. Mg(2+) is required as a cofactor.

It is found in the cytoplasm. It carries out the reaction IMP + L-aspartate + GTP = N(6)-(1,2-dicarboxyethyl)-AMP + GDP + phosphate + 2 H(+). The protein operates within purine metabolism; AMP biosynthesis via de novo pathway; AMP from IMP: step 1/2. In terms of biological role, plays an important role in the de novo pathway of purine nucleotide biosynthesis. Catalyzes the first committed step in the biosynthesis of AMP from IMP. In Pseudoalteromonas translucida (strain TAC 125), this protein is Adenylosuccinate synthetase 1.